A 441-amino-acid chain; its full sequence is Carbohydrate sulfotransferase 3 (441 aa).

Residues 1-4 (MKMR) are Cytoplasmic-facing. Residues 5 to 21 (SKYAIILFFVVALVIIE) traverse the membrane as a helical; Signal-anchor for type II membrane protein segment. The Lumenal portion of the chain corresponds to 22–441 (KERNIISRVS…LLENRNFWIT (420 aa)). N-linked (GlcNAc...) asparagine glycans are attached at residues asparagine 47 and asparagine 58. 106-112 (TRTGSSF) contacts 3'-phosphoadenylyl sulfate. Asparagine 221 carries an N-linked (GlcNAc...) asparagine glycan. 266 to 274 (RDPRAVLAS) lines the 3'-phosphoadenylyl sulfate pocket. N-linked (GlcNAc...) asparagine glycosylation occurs at asparagine 427.

Belongs to the sulfotransferase 1 family. Gal/GlcNAc/GalNAc subfamily. N-glycosylated. In terms of tissue distribution, in electric organ, it is moderately expressed in spinal cord and electric lobe and undetectable in non-neural tissues. Expressed in a punctate distribution in the innervated portion of electrocytes. In the CNS, it is localized within the somas of motor neurons and neurons of the electromotor nucleus.

The protein resides in the golgi apparatus membrane. The catalysed reaction is chondroitin beta-D-glucuronate + n 3'-phosphoadenylyl sulfate = chondroitin 6'-sulfate + n adenosine 3',5'-bisphosphate + n H(+). It carries out the reaction 3'-phosphoadenylyl sulfate + keratan = adenosine 3',5'-bisphosphate + keratan 6'-sulfate.. In terms of biological role, sulfotransferase that utilizes 3'-phospho-5'-adenylyl sulfate (PAPS) as sulfonate donor to catalyze the transfer of sulfate to position 6 of the N-acetylgalactosamine (GalNAc) residue of chondroitin. Chondroitin sulfate constitutes the predominant proteoglycan present in cartilage and is distributed on the surfaces of many cells and extracellular matrices. Catalyzes with a lower efficiency the sulfation of Gal residues of keratan sulfate, another glycosaminoglycan. Can also catalyze the sulfation of the Gal residues in sialyl N-acetyllactosamine (sialyl LacNAc) oligosaccharides. The polypeptide is Carbohydrate sulfotransferase 3 (CHST3) (Tetronarce californica (Pacific electric ray)).